The primary structure comprises 532 residues: E3 ubiquitin-protein ligase rnf8-B (532 aa).

An FHA domain is found at 30 to 84 (VTMGRGLGVTYQLKPTLCPLMISRTHCLFKQNARDEWTVTDNKSLNGVWRNKERL). Positions 127 to 209 (SLIRPLPGKT…VETDTVSPTQ (83 aa)) are disordered. Basic and acidic residues predominate over residues 169–178 (VSRDGEDSAK). Residues 377–415 (CIICSEHFIEAVTLNCAHSFCSYCIKSWRKRKEECPICR) form an RING-type zinc finger.

It belongs to the RNF8 family. In terms of assembly, homodimer. Forms a E2-E3 ubiquitin ligase complex composed of the rnf8 homodimer and a E2 heterodimer of ube2n and ube2v2.

It is found in the nucleus. The catalysed reaction is S-ubiquitinyl-[E2 ubiquitin-conjugating enzyme]-L-cysteine + [acceptor protein]-L-lysine = [E2 ubiquitin-conjugating enzyme]-L-cysteine + N(6)-ubiquitinyl-[acceptor protein]-L-lysine.. The protein operates within protein modification; protein ubiquitination. Its function is as follows. E3 ubiquitin-protein ligase that plays a key role in DNA damage signaling via 2 distinct roles: by mediating the 'Lys-63'-linked ubiquitination of histones H2A and H2AX and promoting the recruitment of DNA repair proteins at double-strand breaks (DSBs) sites, and by catalyzing 'Lys-48'-linked ubiquitination to remove target proteins from DNA damage sites. Following DNA DSBs, it is recruited to the sites of damage by ATM-phosphorylated mdc1 and catalyzes the 'Lys-63'-linked ubiquitination of histones H2A and H2AX, thereby promoting the formation of tp53bp1 and brca1 ionizing radiation-induced foci (IRIF). H2A ubiquitination also mediates the ATM-dependent transcriptional silencing at regions flanking DSBs in cis, a mechanism to avoid collision between transcription and repair intermediates. Also catalyzes the formation of 'Lys-48'-linked polyubiquitin chains, leading to degradation of substrate proteins. In addition to its function in damage signaling, also plays a role in higher-order chromatin structure by mediating extensive chromatin decondensation. This chain is E3 ubiquitin-protein ligase rnf8-B, found in Xenopus laevis (African clawed frog).